Consider the following 834-residue polypeptide: Periplasmic nitrate reductase (834 aa).

The tat-type signal signal peptide spans 1–32 (MTEPKIDRRQLLKLEAAAIAAAAAGMPTVARA). The region spanning 44-100 (LKWDKAACRFCGTGCSVMVATKDNRVVATHGDIKAEVNRGLNCVKGYFLSKIMYGHD) is the 4Fe-4S Mo/W bis-MGD-type domain. [4Fe-4S] cluster-binding residues include Cys-51, Cys-54, Cys-58, and Cys-86. Mo-bis(molybdopterin guanine dinucleotide) contacts are provided by residues Lys-88, Gln-155, Asn-180, Cys-184, 217-224 (WGSNMAEM), 248-252 (STFEH), 267-269 (QTD), Met-378, Gln-382, Asn-488, 514-515 (SD), Lys-537, Asp-564, and 724-733 (TGRVVEHWHS). Trp-800 is a binding site for substrate. Positions 808 and 825 each coordinate Mo-bis(molybdopterin guanine dinucleotide).

Belongs to the prokaryotic molybdopterin-containing oxidoreductase family. NasA/NapA/NarB subfamily. In terms of assembly, component of the periplasmic nitrate reductase NapAB complex composed of NapA and NapB. The cofactor is [4Fe-4S] cluster. Requires Mo-bis(molybdopterin guanine dinucleotide) as cofactor. Post-translationally, predicted to be exported by the Tat system. The position of the signal peptide cleavage has not been experimentally proven.

The protein localises to the periplasm. The enzyme catalyses 2 Fe(II)-[cytochrome] + nitrate + 2 H(+) = 2 Fe(III)-[cytochrome] + nitrite + H2O. Its function is as follows. Catalytic subunit of the periplasmic nitrate reductase complex NapAB. Receives electrons from NapB and catalyzes the reduction of nitrate to nitrite. This is Periplasmic nitrate reductase from Bradyrhizobium sp. (strain ORS 278).